The following is a 140-amino-acid chain: Small ribosomal subunit protein uS11c (140 aa).

Belongs to the universal ribosomal protein uS11 family. Part of the 30S ribosomal subunit.

The protein resides in the plastid. It localises to the chloroplast. The protein is Small ribosomal subunit protein uS11c of Pelargonium hortorum (Common geranium).